The chain runs to 378 residues: tRNA (guanine(37)-N(1))-methyltransferase (378 aa).

S-adenosyl-L-methionine is bound by residues His196, 234–235 (DL), 262–263 (DA), and Asn282.

It belongs to the class I-like SAM-binding methyltransferase superfamily. TRM5/TYW2 family. In terms of assembly, monomer.

Its subcellular location is the mitochondrion matrix. It is found in the nucleus. The protein localises to the cytoplasm. It carries out the reaction guanosine(37) in tRNA + S-adenosyl-L-methionine = N(1)-methylguanosine(37) in tRNA + S-adenosyl-L-homocysteine + H(+). Its function is as follows. Specifically methylates the N1 position of guanosine-37 in various cytoplasmic and mitochondrial tRNAs. Methylation is not dependent on the nature of the nucleoside 5' of the target nucleoside. This is the first step in the biosynthesis of wybutosine (yW), a modified base adjacent to the anticodon of tRNAs and required for accurate decoding. This Trichomonas vaginalis (strain ATCC PRA-98 / G3) protein is tRNA (guanine(37)-N(1))-methyltransferase.